The following is a 547-amino-acid chain: ATP synthase subunit beta, mitochondrial (547 aa).

The transit peptide at methionine 1–tyrosine 45 directs the protein to the mitochondrion. Low complexity predominate over residues lysine 52–threonine 62. Positions lysine 52–lysine 74 are disordered. Residue glycine 226–threonine 233 participates in ATP binding.

Belongs to the ATPase alpha/beta chains family. F-type ATPases have 2 components, CF(1) - the catalytic core - and CF(0) - the membrane proton channel. CF(1) has five subunits: alpha(3), beta(3), gamma(1), delta(1), epsilon(1). CF(0) has three main subunits: a, b and c.

It localises to the mitochondrion. The protein resides in the mitochondrion inner membrane. The enzyme catalyses ATP + H2O + 4 H(+)(in) = ADP + phosphate + 5 H(+)(out). Its function is as follows. Mitochondrial membrane ATP synthase (F(1)F(0) ATP synthase or Complex V) produces ATP from ADP in the presence of a proton gradient across the membrane which is generated by electron transport complexes of the respiratory chain. F-type ATPases consist of two structural domains, F(1) - containing the extramembraneous catalytic core, and F(0) - containing the membrane proton channel, linked together by a central stalk and a peripheral stalk. During catalysis, ATP synthesis in the catalytic domain of F(1) is coupled via a rotary mechanism of the central stalk subunits to proton translocation. Subunits alpha and beta form the catalytic core in F(1). Rotation of the central stalk against the surrounding alpha(3)beta(3) subunits leads to hydrolysis of ATP in three separate catalytic sites on the beta subunits. The sequence is that of ATP synthase subunit beta, mitochondrial (ATPB) from Daucus carota (Wild carrot).